Reading from the N-terminus, the 209-residue chain is Thymidylate kinase (209 aa).

10-17 (GPDGAGKT) contributes to the ATP binding site.

This sequence belongs to the thymidylate kinase family.

The catalysed reaction is dTMP + ATP = dTDP + ADP. Its function is as follows. Phosphorylation of dTMP to form dTDP in both de novo and salvage pathways of dTTP synthesis. This Pediococcus pentosaceus (strain ATCC 25745 / CCUG 21536 / LMG 10740 / 183-1w) protein is Thymidylate kinase.